We begin with the raw amino-acid sequence, 372 residues long: N-methyl-L-tryptophan oxidase (372 aa).

Position 4-34 (4-34) interacts with FAD; it reads DLIIIGSGSVGAAAGYYATRAGLKVLMTDAH. S-8alpha-FAD cysteine is present on Cys-307.

The protein belongs to the MSOX/MTOX family. MTOX subfamily. In terms of assembly, monomer. It depends on FAD as a cofactor.

It carries out the reaction N(alpha)-methyl-L-tryptophan + O2 + H2O = L-tryptophan + formaldehyde + H2O2. In terms of biological role, catalyzes the oxidative demethylation of N-methyl-L-tryptophan. The polypeptide is N-methyl-L-tryptophan oxidase (Salmonella typhi).